A 489-amino-acid polypeptide reads, in one-letter code: Cytochrome P450 2C70 (489 aa).

The N-terminal stretch at 1 to 27 (MALFIFLGIWLSCLVFLFLWNQHHVRR) is a signal peptide. Position 434 (Cys-434) interacts with heme.

It belongs to the cytochrome P450 family. Heme is required as a cofactor.

The protein resides in the endoplasmic reticulum membrane. It is found in the microsome membrane. It carries out the reaction chenodeoxycholate + reduced [NADPH--hemoprotein reductase] + O2 = alpha-muricholate + oxidized [NADPH--hemoprotein reductase] + H2O + H(+). The enzyme catalyses ursodeoxycholate + reduced [NADPH--hemoprotein reductase] + O2 = beta-muricholate + oxidized [NADPH--hemoprotein reductase] + H2O + H(+). Functionally, a cytochrome P450 monooxygenase involved in muricholic acid (MCA) synthesis. Hydroxylates at the 6-beta position two major bile acids, chenodeoxycholic acid (CDCA) and ursodeoxycholic acid (UDCA) to form alpha-MCA and beta-MCA, respectively. May regulate NR1H4/farnesoid X receptor signaling, as taurine-conjugated MCAs are antagonists of NR1H4. Mechanistically, uses molecular oxygen inserting one oxygen atom into a substrate, and reducing the second into a water molecule, with two electrons provided by NADPH via cytochrome P450 reductase (CPR; NADPH-ferrihemoprotein reductase). This chain is Cytochrome P450 2C70, found in Rattus norvegicus (Rat).